Reading from the N-terminus, the 219-residue chain is Salivary IL-4-inducing protein (219 aa).

An N-terminal signal peptide occupies residues 1–19 (MKYLLTLLMALSLVNLMLT). The disordered stretch occupies residues 19 to 109 (TRPTPEDDGG…KNDPRETYNK (91 aa)). Low complexity predominate over residues 30 to 43 (SEEPQTQETTGETT). The span at 72-107 (DDTAKKEDDGESKDGEGSEKSDKEKGEPKNDPRETY) shows a compositional bias: basic and acidic residues.

In terms of tissue distribution, salivary gland (at protein level).

The protein localises to the secreted. Functionally, induces expression of IL4 in host skin by diverting host CD4 cells away from Th1 and towards Th2 responsiveness. Induces expression of IL10 in host skin. Down-regulates expression of IL12B, IFN-gamma (IFNG) and TNF-alpha (TNF) in host skin. This chain is Salivary IL-4-inducing protein, found in Aedes aegypti (Yellowfever mosquito).